Reading from the N-terminus, the 322-residue chain is Ferredoxin--NADP reductase (322 aa).

FAD is bound by residues D34, Q42, Y47, V87, F120, D279, and T320.

This sequence belongs to the ferredoxin--NADP reductase type 2 family. In terms of assembly, homodimer. FAD is required as a cofactor.

The catalysed reaction is 2 reduced [2Fe-2S]-[ferredoxin] + NADP(+) + H(+) = 2 oxidized [2Fe-2S]-[ferredoxin] + NADPH. In Streptococcus sanguinis (strain SK36), this protein is Ferredoxin--NADP reductase.